The following is a 185-amino-acid chain: MIFVIGLGNPGKEYQYTRHNIGFIVIEKIANQYNLSFSTKKKFNCEIVESSVEKQKLIFIKPTTYMNLSGKSVISVKTYYNICSEKIFVIHDDIDLETGRIKFKTGGGNGGHNGLKSIDRVIGNNYNRIRIGVGRPQNNQDVADYVLNNFPRSEYEIVIQSIDKITNNFDLILENKLEEFKNKIG.

Residue Y14 participates in tRNA binding. Catalysis depends on H19, which acts as the Proton acceptor. Y65, N67, and N113 together coordinate tRNA.

It belongs to the PTH family. As to quaternary structure, monomer.

It localises to the cytoplasm. The enzyme catalyses an N-acyl-L-alpha-aminoacyl-tRNA + H2O = an N-acyl-L-amino acid + a tRNA + H(+). In terms of biological role, hydrolyzes ribosome-free peptidyl-tRNAs (with 1 or more amino acids incorporated), which drop off the ribosome during protein synthesis, or as a result of ribosome stalling. Its function is as follows. Catalyzes the release of premature peptidyl moieties from peptidyl-tRNA molecules trapped in stalled 50S ribosomal subunits, and thus maintains levels of free tRNAs and 50S ribosomes. The polypeptide is Peptidyl-tRNA hydrolase (Rickettsia canadensis (strain McKiel)).